Reading from the N-terminus, the 312-residue chain is Malate dehydrogenase (312 aa).

NAD(+)-binding positions include 7-13 (GAAGGIG) and Asp34. Substrate-binding residues include Arg81 and Arg87. NAD(+) contacts are provided by residues Asn94 and 117–119 (ITN). Asn119 and Arg153 together coordinate substrate. Catalysis depends on His177, which acts as the Proton acceptor. Met227 is a binding site for NAD(+).

The protein belongs to the LDH/MDH superfamily. MDH type 1 family. Homodimer.

It carries out the reaction (S)-malate + NAD(+) = oxaloacetate + NADH + H(+). In terms of biological role, catalyzes the reversible oxidation of malate to oxaloacetate. The sequence is that of Malate dehydrogenase from Serratia proteamaculans (strain 568).